A 116-amino-acid polypeptide reads, in one-letter code: MARIAGVDLPRDKRIVIALTYIYGIGEHTAQEICAAAGVSEDVRSKDLTPEQQEKLRAEVDKYRVEGDLRREVSMNIKRLVDIGSYRGIRHRRGLPVRGQNTKNNARTRKGAKRSR.

The disordered stretch occupies residues 92–116; sequence RRGLPVRGQNTKNNARTRKGAKRSR. The span at 106–116 shows a compositional bias: basic residues; the sequence is ARTRKGAKRSR.

The protein belongs to the universal ribosomal protein uS13 family. Part of the 30S ribosomal subunit. Forms a loose heterodimer with protein S19. Forms two bridges to the 50S subunit in the 70S ribosome.

Functionally, located at the top of the head of the 30S subunit, it contacts several helices of the 16S rRNA. In the 70S ribosome it contacts the 23S rRNA (bridge B1a) and protein L5 of the 50S subunit (bridge B1b), connecting the 2 subunits; these bridges are implicated in subunit movement. Contacts the tRNAs in the A and P-sites. The protein is Small ribosomal subunit protein uS13 of Lactobacillus delbrueckii subsp. bulgaricus (strain ATCC 11842 / DSM 20081 / BCRC 10696 / JCM 1002 / NBRC 13953 / NCIMB 11778 / NCTC 12712 / WDCM 00102 / Lb 14).